The primary structure comprises 412 residues: Branched-chain alpha-ketoacid dehydrogenase kinase (412 aa).

A mitochondrion-targeting transit peptide spans 1 to 30 (MILTSVLGSGPRSGSSLWPLLGSSLSLRVR). A Phosphoserine modification is found at S31. In terms of domain architecture, Histidine kinase spans 159–404 (LDDHKDVVTL…DVYLRLRHID (246 aa)). An N6-acetyllysine mark is found at K192 and K233. ATP-binding residues include N279 and D315. Mg(2+) is bound at residue N279. K(+)-binding residues include V328, D330, and F333. Residues T334 and T335 each contribute to the ATP site. 2 positions are modified to phosphoserine: S356 and S360. Positions 364, 367, and 370 each coordinate ATP. G367 serves as a coordination point for K(+).

This sequence belongs to the PDK/BCKDK protein kinase family. As to quaternary structure, homodimer. Homotetramer. Dimerizes through interaction of two opposing nucleotide-binding domains. Interacts with E2 component of the branched-chain alpha-ketoacid dehydrogenase (BCKDH) complex. Competes with BCKDK for binding to the E2 component; this interaction is modulated by branched-chain alpha-keto acids. At steady state, BCKDH holoenzyme contains BCKDK and BCKDHA is phosphorylated. In response to high levels of branched-chain alpha-keto acids, the inhibitory BCKDK is replaced by activating PPM1K leading to BCKDHA dephosphorylation and BCAA degradation. In terms of processing, autophosphorylated. In terms of tissue distribution, expressed in heart and liver.

Its subcellular location is the mitochondrion matrix. The protein resides in the mitochondrion. The catalysed reaction is L-seryl-[3-methyl-2-oxobutanoate dehydrogenase] + ATP = O-phospho-L-seryl-[3-methyl-2-oxobutanoate dehydrogenase] + ADP + H(+). It catalyses the reaction L-seryl-[protein] + ATP = O-phospho-L-seryl-[protein] + ADP + H(+). With respect to regulation, the ATP-ase activity is up-regulated by potassium and rubidium ions but not by sodium ions. Up-regulated in the presence of apo- or lipoylated-DBT/E2b subunit of the BCKDH complex. Serine/threonine-protein kinase component of macronutrients metabolism. Forms a functional kinase and phosphatase pair with PPM1K, serving as a metabolic regulatory node that coordinates branched-chain amino acids (BCAAs) with glucose and lipid metabolism via two distinct phosphoprotein targets: mitochondrial BCKDHA subunit of the branched-chain alpha-ketoacid dehydrogenase (BCKDH) complex and cytosolic ACLY, a lipogenic enzyme of Krebs cycle. Phosphorylates and inactivates mitochondrial BCKDH complex a multisubunit complex consisting of three multimeric components each involved in different steps of BCAA catabolism: E1 composed of BCKDHA and BCKDHB, E2 core composed of DBT monomers, and E3 composed of DLD monomers. Associates with the E2 component of BCKDH complex and phosphorylates BCKDHA on Ser-333, leading to conformational changes that interrupt substrate channeling between E1 and E2 and inactivates the BCKDH complex. phosphorylates ACLY on Ser-455 in response to changes in cellular carbohydrate abundance such as occurs during fasting to feeding metabolic transition. Refeeding stimulates MLXIPL/ChREBP transcription factor, leading to increased BCKDK to PPM1K expression ratio, phosphorylation and activation of ACLY that ultimately results in the generation of malonyl-CoA and oxaloacetate immediate substrates of de novo lipogenesis and glucogenesis, respectively. Recognizes phosphosites having SxxE/D canonical motif. In Rattus norvegicus (Rat), this protein is Branched-chain alpha-ketoacid dehydrogenase kinase (Bckdk).